Here is a 301-residue protein sequence, read N- to C-terminus: Sulfate adenylyltransferase subunit 2 (301 aa).

It belongs to the PAPS reductase family. CysD subfamily. As to quaternary structure, heterodimer composed of CysD, the smaller subunit, and CysN.

The enzyme catalyses sulfate + ATP + H(+) = adenosine 5'-phosphosulfate + diphosphate. The protein operates within sulfur metabolism; hydrogen sulfide biosynthesis; sulfite from sulfate: step 1/3. Functionally, with CysN forms the ATP sulfurylase (ATPS) that catalyzes the adenylation of sulfate producing adenosine 5'-phosphosulfate (APS) and diphosphate, the first enzymatic step in sulfur assimilation pathway. APS synthesis involves the formation of a high-energy phosphoric-sulfuric acid anhydride bond driven by GTP hydrolysis by CysN coupled to ATP hydrolysis by CysD. This is Sulfate adenylyltransferase subunit 2 from Shewanella loihica (strain ATCC BAA-1088 / PV-4).